We begin with the raw amino-acid sequence, 175 residues long: Nucleoside triphosphate/diphosphate phosphatase (175 aa).

The active-site Proton donor is R23. Positions 87, 103, 105, 107, 120, and 123 each coordinate Mg(2+).

The protein belongs to the Ntdp family. It depends on Mg(2+) as a cofactor.

It catalyses the reaction a ribonucleoside 5'-triphosphate + H2O = a ribonucleoside 5'-diphosphate + phosphate + H(+). The catalysed reaction is a ribonucleoside 5'-diphosphate + H2O = a ribonucleoside 5'-phosphate + phosphate + H(+). In terms of biological role, has nucleoside phosphatase activity towards nucleoside triphosphates and nucleoside diphosphates. This is Nucleoside triphosphate/diphosphate phosphatase from Shouchella clausii (strain KSM-K16) (Alkalihalobacillus clausii).